The chain runs to 428 residues: Serine--tRNA ligase (428 aa).

236–238 contacts L-serine; sequence TAE. 267–269 serves as a coordination point for ATP; the sequence is RSE. Glu290 provides a ligand contact to L-serine. 354-357 contributes to the ATP binding site; the sequence is EISS. L-serine is bound at residue Ser388.

This sequence belongs to the class-II aminoacyl-tRNA synthetase family. Type-1 seryl-tRNA synthetase subfamily. As to quaternary structure, homodimer. The tRNA molecule binds across the dimer.

Its subcellular location is the cytoplasm. It catalyses the reaction tRNA(Ser) + L-serine + ATP = L-seryl-tRNA(Ser) + AMP + diphosphate + H(+). The enzyme catalyses tRNA(Sec) + L-serine + ATP = L-seryl-tRNA(Sec) + AMP + diphosphate + H(+). Its pathway is aminoacyl-tRNA biosynthesis; selenocysteinyl-tRNA(Sec) biosynthesis; L-seryl-tRNA(Sec) from L-serine and tRNA(Sec): step 1/1. Catalyzes the attachment of serine to tRNA(Ser). Is also able to aminoacylate tRNA(Sec) with serine, to form the misacylated tRNA L-seryl-tRNA(Sec), which will be further converted into selenocysteinyl-tRNA(Sec). The protein is Serine--tRNA ligase of Psychrobacter sp. (strain PRwf-1).